The primary structure comprises 245 residues: 1-(5-phosphoribosyl)-5-[(5-phosphoribosylamino)methylideneamino] imidazole-4-carboxamide isomerase (245 aa).

Asp8 acts as the Proton acceptor in catalysis. Catalysis depends on Asp129, which acts as the Proton donor.

Belongs to the HisA/HisF family.

The protein resides in the cytoplasm. The catalysed reaction is 1-(5-phospho-beta-D-ribosyl)-5-[(5-phospho-beta-D-ribosylamino)methylideneamino]imidazole-4-carboxamide = 5-[(5-phospho-1-deoxy-D-ribulos-1-ylimino)methylamino]-1-(5-phospho-beta-D-ribosyl)imidazole-4-carboxamide. Its pathway is amino-acid biosynthesis; L-histidine biosynthesis; L-histidine from 5-phospho-alpha-D-ribose 1-diphosphate: step 4/9. This chain is 1-(5-phosphoribosyl)-5-[(5-phosphoribosylamino)methylideneamino] imidazole-4-carboxamide isomerase, found in Rhodopseudomonas palustris (strain HaA2).